Reading from the N-terminus, the 596-residue chain is Elongation factor 4 (596 aa).

The region spanning 2–184 is the tr-type G domain; sequence KHIRNFSIIA…MIVKDVPPPV (183 aa). GTP-binding positions include 14-19 and 131-134; these read DHGKST and NKID.

Belongs to the TRAFAC class translation factor GTPase superfamily. Classic translation factor GTPase family. LepA subfamily.

It localises to the cell inner membrane. The catalysed reaction is GTP + H2O = GDP + phosphate + H(+). Required for accurate and efficient protein synthesis under certain stress conditions. May act as a fidelity factor of the translation reaction, by catalyzing a one-codon backward translocation of tRNAs on improperly translocated ribosomes. Back-translocation proceeds from a post-translocation (POST) complex to a pre-translocation (PRE) complex, thus giving elongation factor G a second chance to translocate the tRNAs correctly. Binds to ribosomes in a GTP-dependent manner. This is Elongation factor 4 from Pseudoalteromonas translucida (strain TAC 125).